The following is an 860-amino-acid chain: Rod cGMP-specific 3',5'-cyclic phosphodiesterase subunit alpha (860 aa).

G2 is subject to N-acetylglycine. 2 consecutive GAF domains span residues 73–222 (QTEK…NLIM) and 254–431 (DIER…GWSV). Residues 483-816 (EEEELAEILQ…KEWKALADEY (334 aa)) enclose the PDEase domain. The Proton donor role is filled by H559. The a divalent metal cation site is built by H563, H599, D600, and D720. The tract at residues 821 to 860 (KVQEEKKQKQQSAKSAAAGNQPGGNPSPGGATTSKSCCIQ) is disordered. A compositionally biased stretch (low complexity) spans 830 to 851 (QQSAKSAAAGNQPGGNPSPGGA). A Cysteine methyl ester modification is found at C857. The S-farnesyl cysteine moiety is linked to residue C857. Positions 858-860 (CIQ) are cleaved as a propeptide — removed in mature form.

Belongs to the cyclic nucleotide phosphodiesterase family. Oligomer composed of two catalytic chains (alpha and beta), an inhibitory chain (gamma) and the delta chain. A divalent metal cation serves as cofactor.

It localises to the cell membrane. It is found in the cell projection. Its subcellular location is the cilium. The protein resides in the photoreceptor outer segment. The catalysed reaction is 3',5'-cyclic GMP + H2O = GMP + H(+). Functionally, rod-specific cGMP phosphodiesterase that catalyzes the hydrolysis of 3',5'-cyclic GMP. This protein participates in processes of transmission and amplification of the visual signal. The sequence is that of Rod cGMP-specific 3',5'-cyclic phosphodiesterase subunit alpha from Homo sapiens (Human).